The following is a 234-amino-acid chain: Triosephosphate isomerase (234 aa).

8-10 (NFK) provides a ligand contact to substrate. Catalysis depends on His-90, which acts as the Electrophile. The active-site Proton acceptor is Glu-159. Positions 165 and 197 each coordinate substrate.

Belongs to the triosephosphate isomerase family. Homodimer.

Its subcellular location is the cytoplasm. The catalysed reaction is D-glyceraldehyde 3-phosphate = dihydroxyacetone phosphate. Its pathway is carbohydrate biosynthesis; gluconeogenesis. It functions in the pathway carbohydrate degradation; glycolysis; D-glyceraldehyde 3-phosphate from glycerone phosphate: step 1/1. Involved in the gluconeogenesis. Catalyzes stereospecifically the conversion of dihydroxyacetone phosphate (DHAP) to D-glyceraldehyde-3-phosphate (G3P). The polypeptide is Triosephosphate isomerase (Helicobacter pylori (strain J99 / ATCC 700824) (Campylobacter pylori J99)).